A 134-amino-acid polypeptide reads, in one-letter code: Profilin-2 (134 aa).

Cysteines 13 and 118 form a disulfide. The Involved in PIP2 interaction signature appears at 84–100 (AVIRGKKGSGGITIKKT). Position 114 is a phosphothreonine (Thr114).

Belongs to the profilin family. Occurs in many kinds of cells as a complex with monomeric actin in a 1:1 ratio. In terms of processing, phosphorylated by MAP kinases.

It localises to the cytoplasm. Its subcellular location is the cytoskeleton. Binds to actin and affects the structure of the cytoskeleton. At high concentrations, profilin prevents the polymerization of actin, whereas it enhances it at low concentrations. In Olea europaea (Common olive), this protein is Profilin-2.